The sequence spans 242 residues: UPF0246 protein SP_1547 (242 aa).

The protein belongs to the UPF0246 family.

The protein is UPF0246 protein SP_1547 of Streptococcus pneumoniae serotype 4 (strain ATCC BAA-334 / TIGR4).